The following is a 481-amino-acid chain: UDP-glycosyltransferase 72B3 (481 aa).

Residues serine 277, 347–349, 364–372, and 386–389 each bind UDP-alpha-D-glucose; these read APQ, HCGWNSSLE, and YAEQ.

The protein belongs to the UDP-glycosyltransferase family.

In terms of biological role, possesses low quercetin 3-O-glucosyltransferase activity in vitro. In Arabidopsis thaliana (Mouse-ear cress), this protein is UDP-glycosyltransferase 72B3 (UGT72B3).